The following is a 175-amino-acid chain: Large ribosomal subunit protein uL10 (175 aa).

The protein belongs to the universal ribosomal protein uL10 family. In terms of assembly, part of the ribosomal stalk of the 50S ribosomal subunit. The N-terminus interacts with L11 and the large rRNA to form the base of the stalk. The C-terminus forms an elongated spine to which L12 dimers bind in a sequential fashion forming a multimeric L10(L12)X complex.

Its function is as follows. Forms part of the ribosomal stalk, playing a central role in the interaction of the ribosome with GTP-bound translation factors. This chain is Large ribosomal subunit protein uL10, found in Prochlorococcus marinus (strain NATL1A).